The primary structure comprises 224 residues: PHD finger-containing protein 5 (224 aa).

Residues 31–81 (KKPCEVCGSDANELLMMTCFMCRDTREHTYCARVMFQRVPRLWICEECRDF) form a PHD-type zinc finger. Zn(2+) contacts are provided by Cys34, Cys37, Cys49, Cys52, His58, Cys61, Cys75, and Cys78. The disordered stretch occupies residues 116–137 (PRTNQVVDNHQDPPIDQTDPSS).

As to quaternary structure, interacts directly with AIPP3/BDT1.

Together with AIPP3/BDT1, cooperates to form a BAH-PHD bivalent histone reader complex able to read histone H3 lysine 27 trimethylation (H3K27me3) histone marks in order to regulate transcription, especially to prevent early flowering; promotes AIPP3/BDT1 binding to H3K27me3. This is PHD finger-containing protein 5 from Arabidopsis thaliana (Mouse-ear cress).